The following is a 528-amino-acid chain: NAC domain-containing protein 13 (528 aa).

One can recognise an NAC domain in the interval 10-160 (LAPGFRFHPT…AYVLYKIYKK (151 aa)). A DNA-binding region spans residues 107-166 (VGEKKTLVFHRGRAPNGERTNWVMHEYTLHKEELKRCGGEDVKDAYVLYKIYKKSGSGPK). The segment at 388-419 (EAPGTGDSSEFLNPVPSGISTTNEDDPSKDES) is disordered. Residues 499 to 519 (FFCLSIIGALCALFWVIIGTM) form a helical membrane-spanning segment.

As to quaternary structure, interacts with RCD1. As to expression, expressed in roots, rosette leaves, shoot apex, stems and flowers.

It is found in the endoplasmic reticulum membrane. It localises to the nucleus. In terms of biological role, transcriptional activator activated by proteolytic cleavage through regulated intramembrane proteolysis (RIP). Involved in oxidative stress tolerance by mediating regulation of mitochondrial retrograde signaling during mitochondrial dysfunction. Interacts directly with the mitochondrial dysfunction DNA consensus motif 5'-CTTGNNNNNCA[AC]G-3', a cis-regulatory elements of several mitochondrial retrograde regulation-induced genes, and triggers increased oxidative stress tolerance. This is NAC domain-containing protein 13 from Arabidopsis thaliana (Mouse-ear cress).